A 402-amino-acid polypeptide reads, in one-letter code: Fugralins biosynthesis cluster protein 2 (402 aa).

5 helical membrane passes run 28-48 (NCLA…CFLL), 109-129 (ILIF…AILV), 145-165 (IFWW…TAIV), 232-252 (VIFG…AVTV), and 264-284 (LAPL…IVCV). Disordered regions lie at residues 312–335 (NPNT…TGPK) and 378–402 (TQDN…PWGV). Over residues 324–334 (TKGSQLSSTGP) the composition is skewed to polar residues. N381 carries N-linked (GlcNAc...) asparagine glycosylation.

This sequence belongs to the SAT4 family.

The protein resides in the membrane. It participates in secondary metabolite biosynthesis. Its function is as follows. Part of the gene cluster that mediates the biosynthesis of the tetraketides fugralins such as linear fugralin A and cyclic fugralin B, volatile compounds that play a role in the asexual reproductive cycle but are not involved in pathogenicity. One of the key features of fugralins is the presence of a double methyl group, which is only rarely encountered in fungal secondary metabolites. As the fugralins cluster does not contain an independent methyltransferase, the PKS FGR1 is probably responsible for adding two methyl groups to the same carbon atom. Fugralin B is similar to fugralin A except for a cyclization between the carboxylic acid C-8 and the alcohol on C-4 resulting in a six membered lactone ring, probably catalyzed by the cyclase FGR4. The exact role of the individual cluster genes remains unknown and further work is needed to unravel the biosynthetic pathway. The chain is Fugralins biosynthesis cluster protein 2 from Gibberella zeae (strain ATCC MYA-4620 / CBS 123657 / FGSC 9075 / NRRL 31084 / PH-1) (Wheat head blight fungus).